An 851-amino-acid chain; its full sequence is UPF0182 protein CYA_1810 (851 aa).

The next 7 helical transmembrane spans lie at 7–27 (GLVL…LASF), 47–67 (VLAR…VVGS), 76–96 (ASTA…AWSL), 141–161 (FNLV…ELGL), 168–188 (LALS…LFLL), 220–240 (LPAT…FWAL), and 259–279 (WASS…FGLL).

This sequence belongs to the UPF0182 family.

The protein resides in the cell membrane. In Synechococcus sp. (strain JA-3-3Ab) (Cyanobacteria bacterium Yellowstone A-Prime), this protein is UPF0182 protein CYA_1810.